A 193-amino-acid polypeptide reads, in one-letter code: Protein hunchback (193 aa).

Basic residues predominate over residues 18–31 (HLHHHHAHHSHHRH). 2 disordered regions span residues 18–57 (HLHHHHAHHSHHRHDSNSNSNASSPHQSPLPSPNPPSNTN) and 153–193 (LTPP…KYMA). Positions 34 to 44 (NSNSNASSPHQ) are enriched in low complexity. The segment covering 174–193 (EPEKEHDLMSNSSEDMKYMA) has biased composition (basic and acidic residues).

It belongs to the hunchback C2H2-type zinc-finger protein family.

It localises to the nucleus. Functionally, gap class segmentation protein that controls development of head structures. The polypeptide is Protein hunchback (hb) (Drosophila petalopeza (Fruit fly)).